Consider the following 170-residue polypeptide: CFA/I fimbrial subunit B (170 aa).

Residues 1–23 (MKFKKTIGAMALTTMFVAVSASA) form the signal peptide.

The protein belongs to the fimbrial CS1 protein family. In terms of assembly, CFA/I fimbriae are rather rigid, thread-like filaments of 0.5-1 micrometer, with an apparent axial hole, and a diameter of 7 nanometers. A single CFA/I fimbria consists of about 100 identical protein subunits.

The protein localises to the fimbrium. Its function is as follows. Fimbriae (also called pili), polar filaments radiating from the surface of the bacterium to a length of 0.5-1.5 micrometers and numbering 100-300 per cell, enable bacteria to colonize the epithelium of specific host organs. This chain is CFA/I fimbrial subunit B (cfaB), found in Escherichia coli.